An 846-amino-acid chain; its full sequence is MTLTPEASKSVAQPPTQAPLTQEEAIASLGRYGYGWADSDVAGANAQRGLSEAVVRDISAKKNEPDWMLQSRLKALRIFDRKPIPKWGSNLDGIDFDNIKYFVRSTEKQAASWDDLPEDIRNTYDRLGIPEAEKQRLVAGVAAQYESEVVYHQIREDLEAQGVIFLDTDTGLREHPDIFKEYFGTVIPAGDNKFSALNTAVWSGGSFIYVPPGVHVDIPLQAYFRINTENMGQFERTLIIADEGSYVHYVEGCLPAGELITTADGDLRPIESIRVGDFVTGHDGRPHRVTAVQVRDLDGELFTFTPMSPANAFSVTAEHPLLAIPRDEVRVMRKERNGWKAEVNSTKLRSAEPRWIAAKDVAEGDFLIYPKPKPIPHRTVLPLEFARLAGYYLAEGHACLTNGCESLIFSFHSDEFEYVEDVRQACKSLYEKSGSVLIEEHKHSARVTVYTKAGYAAMRDNVGIGSSNKKLSDLLMRQDETFLRELVDAYVNGDGNVTRRNGAVWKRVHTTSRLWAFQLQSILARLGHYATVELRRPGGPGVIMGRNVVRKDIYQVQWTEGGRGPKQARDCGDYFAVPIKKRAVREAHEPVYNLDVENPDSYLAYGFAVHNCTAPIYKSDSLHSAVVEIIVKPHARVRYTTIQNWSNNVYNLVTKRARAEAGATMEWIDGNIGSKVTMKYPAVWMTGEHAKGEVLSVAFAGEDQHQDTGAKMLHLAPNTSSNIVSKSVARGGGRTSYRGLVQVNKGAHGSRSSVKCDALLVDTVSRSDTYPYVDIREDDVTMGHEATVSKVSENQLFYLMSRGLTEDEAMAMVVRGFVEPIAKELPMEYALELNRLIELQMEGAVG.

The tract at residues 1–20 (MTLTPEASKSVAQPPTQAPL) is disordered. Residues 388–528 (LAGYYLAEGH…LQSILARLGH (141 aa)) form the DOD-type homing endonuclease domain.

It belongs to the iron-sulfur cluster assembly SufBD family. Post-translationally, this protein undergoes a protein self splicing that involves a post-translational excision of the intervening region (intein) followed by peptide ligation.

In Mycobacterium bovis (strain ATCC BAA-935 / AF2122/97), this protein is Iron-sulfur cluster assembly SufBD family protein Mb1496.